Reading from the N-terminus, the 91-residue chain is Putative pterin-4-alpha-carbinolamine dehydratase (91 aa).

It belongs to the pterin-4-alpha-carbinolamine dehydratase family.

The catalysed reaction is (4aS,6R)-4a-hydroxy-L-erythro-5,6,7,8-tetrahydrobiopterin = (6R)-L-erythro-6,7-dihydrobiopterin + H2O. In Halobacterium salinarum (strain ATCC 29341 / DSM 671 / R1), this protein is Putative pterin-4-alpha-carbinolamine dehydratase.